The sequence spans 131 residues: Probable ATP synthase subunit g 1, mitochondrial (131 aa).

This sequence belongs to the ATPase g subunit family. In terms of assembly, subunit of the F-type ATPase which has 2 components, CF(1) - the catalytic core - and CF(0) - the membrane proton channel.

It is found in the mitochondrion membrane. Mitochondrial membrane ATP synthase (F(1)F(0) ATP synthase or Complex V) produces ATP from ADP in the presence of a proton gradient across the membrane which is generated by electron transport complexes of the respiratory chain. F-type ATPases consist of two structural domains, F(1) - containing the extramembraneous catalytic core, and F(0) - containing the membrane proton channel, linked together by a central stalk and a peripheral stalk. During catalysis, ATP synthesis in the catalytic domain of F(1) is coupled via a rotary mechanism of the central stalk subunits to proton translocation. Part of the complex F(0) domain. Minor subunit located with subunit a in the membrane. The chain is Probable ATP synthase subunit g 1, mitochondrial from Caenorhabditis elegans.